Here is a 273-residue protein sequence, read N- to C-terminus: Ribosomal RNA small subunit methyltransferase A (273 aa).

Residues asparagine 18, leucine 20, glycine 45, glutamate 66, aspartate 91, and asparagine 113 each coordinate S-adenosyl-L-methionine.

It belongs to the class I-like SAM-binding methyltransferase superfamily. rRNA adenine N(6)-methyltransferase family. RsmA subfamily.

It localises to the cytoplasm. It catalyses the reaction adenosine(1518)/adenosine(1519) in 16S rRNA + 4 S-adenosyl-L-methionine = N(6)-dimethyladenosine(1518)/N(6)-dimethyladenosine(1519) in 16S rRNA + 4 S-adenosyl-L-homocysteine + 4 H(+). Functionally, specifically dimethylates two adjacent adenosines (A1518 and A1519) in the loop of a conserved hairpin near the 3'-end of 16S rRNA in the 30S particle. May play a critical role in biogenesis of 30S subunits. In Escherichia coli O139:H28 (strain E24377A / ETEC), this protein is Ribosomal RNA small subunit methyltransferase A.